Consider the following 297-residue polypeptide: Guanylate kinase (297 aa).

Residues glycine 4–histidine 183 enclose the Guanylate kinase-like domain. Glycine 11–glycine 18 is an ATP binding site. The tract at residues glutamate 204–phenylalanine 297 is unknown.

It belongs to the guanylate kinase family.

It is found in the cytoplasm. It carries out the reaction GMP + ATP = GDP + ADP. In terms of biological role, essential for recycling GMP and indirectly, cGMP. This is Guanylate kinase (gmk) from Mycoplasma mycoides subsp. mycoides SC (strain CCUG 32753 / NCTC 10114 / PG1).